A 108-amino-acid chain; its full sequence is UPF0060 membrane protein Nwi_1459 (108 aa).

Helical transmembrane passes span 5-25 (AAYV…WAWL), 31-51 (VWWL…LTLV), 61-81 (AAYG…VEGI), and 88-108 (LAGA…PHEI).

This sequence belongs to the UPF0060 family.

The protein localises to the cell inner membrane. This is UPF0060 membrane protein Nwi_1459 from Nitrobacter winogradskyi (strain ATCC 25391 / DSM 10237 / CIP 104748 / NCIMB 11846 / Nb-255).